A 312-amino-acid polypeptide reads, in one-letter code: Olfactory receptor 6C75 (312 aa).

Residues 1-23 (MRNSTAVTDFILLGLTSDPQWQV) lie on the Extracellular side of the membrane. An N-linked (GlcNAc...) asparagine glycan is attached at Asn-3. Residues 24–44 (VLFIFLLVTYMLSVTGNLIII) traverse the membrane as a helical segment. Residues 45–63 (TLTLSDPHLQTPMYFFLRN) lie on the Cytoplasmic side of the membrane. The chain crosses the membrane as a helical span at residues 64-84 (FSFLEISFTSVCIPRFLVTVV). Residues 85 to 95 (TGNRTISYNGC) lie on the Extracellular side of the membrane. Cys-95 and Cys-177 form a disulfide bridge. A helical membrane pass occupies residues 96-116 (VAQLFFFIFLGVTEFYLLAAM). At 117 to 140 (SYDRCMAICKPLHYTIIMSTRVCT) the chain is on the cytoplasmic side. A helical transmembrane segment spans residues 141–161 (LLVFSSWLAGFLIIFPPVMLL). The Extracellular portion of the chain corresponds to 162–194 (LQLDFCASNVIDHFICDSSPMLQLSCTNTHFLE). Residues 195–215 (LMAFFLAVVTLMVTLTLVILS) traverse the membrane as a helical segment. Topologically, residues 216–237 (YTNIIRTILKIPSMSQRKKAFS) are cytoplasmic. A helical membrane pass occupies residues 238–258 (TCSSHMIVVSISYSSCIFMYI). The Extracellular segment spans residues 259–269 (KTSARERVTLS). The chain crosses the membrane as a helical span at residues 270–290 (KGVAVLNTSVAPLLNPFIYTL). Residues 291 to 312 (RNKQVKQAFKSMVQKMIFSLNK) are Cytoplasmic-facing.

It belongs to the G-protein coupled receptor 1 family.

Its subcellular location is the cell membrane. In terms of biological role, odorant receptor. The chain is Olfactory receptor 6C75 (OR6C75) from Homo sapiens (Human).